The primary structure comprises 252 residues: Protein BTG3 (252 aa).

The segment at 138–162 (VTSDYHSGSSSSDEETSKEMEVKPS) is disordered.

The protein belongs to the BTG family. Ubiquitous. High expression in the ventricular zone of the developing central nervous system. High in ovary, testis, prostate, thymus and lung.

In terms of biological role, overexpression impairs serum-induced cell cycle progression from the G0/G1 to S phase. This Homo sapiens (Human) protein is Protein BTG3 (BTG3).